The chain runs to 1730 residues: Myosin-7 (1730 aa).

Positions 8 to 56 constitute a Myosin N-terminal SH3-like domain; it reads TVGSHVWVEDPDDAWIDGEVEEVNSEEITVNCSGKTVVAKLNNVYPKDP. Residues 61–731 form the Myosin motor domain; the sequence is LGVDDMTKLA…QMAEMDAHRA (671 aa). Residues 155 to 162 and 208 to 216 contribute to the ATP site; these read GESGAGKT and NNNSSRFGK. Actin-binding stretches follow at residues 494–528, 530–553, 588–612, and 612–634; these read LIEK…YQTF, NHKR…AGDV, FPPL…KQQL, and LQSL…KPNN. IQ domains lie at 757–786, 782–811, 831–850, and 853–882; these read LQAA…EAAS, REAA…SACS, RRAT…HQRY, and TKKA…AAKE. A coiled-coil region spans residues 883–1224; it reads TGALQDAKTK…VSDMETAEQI (342 aa). Positions 1327–1678 constitute a Dilute domain; it reads DRIVPVFGSA…ISNLKLLLTN (352 aa). 2 disordered regions span residues 1367 to 1387 and 1456 to 1520; these read QSST…FGRM and DSSV…SSEE. Residues 1456–1465 show a composition bias toward low complexity; it reads DSSVVNSPSK. The span at 1475 to 1508 shows a compositional bias: basic and acidic residues; the sequence is SSEENSPKKSSEENSPKESSGDKSPQKLSDDNSP.

Belongs to the TRAFAC class myosin-kinesin ATPase superfamily. Myosin family. Plant myosin class XI subfamily. As to quaternary structure, homodimer.

Functionally, myosin heavy chain that is required for the cell cycle-regulated transport of various organelles and proteins for their segregation. Functions by binding with its tail domain to receptor proteins on organelles and exerting force with its N-terminal motor domain against actin filaments, thereby transporting its cargo along polarized actin cables. The sequence is that of Myosin-7 (XI-A) from Arabidopsis thaliana (Mouse-ear cress).